The following is a 580-amino-acid chain: MSRLARDAAAALRRGLLATRRDATAAASTSAATVSRGRRARAVSTTTTTSSSSSSSAAVDARDADADAADEDAWETVVGLELHAQVAADTKLFSGAARQYGARVNANVAPFDAALPGSLPSVNARAVELATRLGVALGGEIHRASRFERKHYAYPDLPHGYQITQRRDPIVRGGRIDVDVGAGATRRLRIEQIQLEMDTGKSVNKTGGGGGGTTTTTIDLNRAGCALVEIVTRPDLRGGEEAAAAAEAFQKTLRFLGVGDANMEEGSLRVDVNVSVRRRGDGGDDGAALGERCEVKNLNSFRSIASAVRFEARRHRELIARGENVERETRSFDPANGETAPLRREQTLDYRFTPEPDVPPIVLSDEYVAAIARDTPELPDVAIRRLADVRGDHALPLKLATAVATHASTARYYEAALSAAKRSAAPRDVDVDAAAVARFVVGELTGEVKRASVAGRVEPLLGLPARLSPERVGELLAAVAAGETTARMAKARPMGWRDVVDALFPPVGDGEGGGEGGGDAAVEAMCRDIVCGMPEEVALFKAGKTRLMGKFVGEAMRRTNGRADPKVVSRALTRALSEEV.

Composition is skewed to low complexity over residues 20–35 and 42–59; these read RRDA…ATVS and AVST…SAAV. The segment at 20 to 64 is disordered; that stretch reads RRDATAAASTSAATVSRGRRARAVSTTTTTSSSSSSSAAVDARDA.

Belongs to the GatB/GatE family. GatB subfamily. As to quaternary structure, subunit of the heterotrimeric GatCAB amidotransferase (AdT) complex, composed of A, B and C subunits.

It localises to the mitochondrion. The protein localises to the plastid. Its subcellular location is the chloroplast. The enzyme catalyses L-glutamyl-tRNA(Gln) + L-glutamine + ATP + H2O = L-glutaminyl-tRNA(Gln) + L-glutamate + ADP + phosphate + H(+). In terms of biological role, allows the formation of correctly charged Gln-tRNA(Gln) through the transamidation of misacylated Glu-tRNA(Gln) in chloroplasts and mitochondria. The reaction takes place in the presence of glutamine and ATP through an activated gamma-phospho-Glu-tRNA(Gln). The chain is Glutamyl-tRNA(Gln) amidotransferase subunit B-2, chloroplastic/mitochondrial from Micromonas pusilla (strain CCMP1545) (Picoplanktonic green alga).